The primary structure comprises 162 residues: Small ribosomal subunit protein uS9 (162 aa).

Belongs to the universal ribosomal protein uS9 family.

The chain is Small ribosomal subunit protein uS9 from Parvibaculum lavamentivorans (strain DS-1 / DSM 13023 / NCIMB 13966).